Reading from the N-terminus, the 281-residue chain is AB hydrolase superfamily protein YclE (281 aa).

The AB hydrolase-1 domain maps to 30-268 (SAVYYPRLFS…SGHQPMLEEP (239 aa)). The active-site Nucleophile is Ser-95. The active site involves Asp-232. The active-site Proton donor is His-261.

It belongs to the AB hydrolase superfamily.

This is AB hydrolase superfamily protein YclE (yclE) from Bacillus subtilis (strain 168).